Reading from the N-terminus, the 131-residue chain is Ribosome-binding factor A (131 aa).

Belongs to the RbfA family. In terms of assembly, monomer. Binds 30S ribosomal subunits, but not 50S ribosomal subunits or 70S ribosomes.

It localises to the cytoplasm. One of several proteins that assist in the late maturation steps of the functional core of the 30S ribosomal subunit. Associates with free 30S ribosomal subunits (but not with 30S subunits that are part of 70S ribosomes or polysomes). Required for efficient processing of 16S rRNA. May interact with the 5'-terminal helix region of 16S rRNA. In Christiangramia forsetii (strain DSM 17595 / CGMCC 1.15422 / KT0803) (Gramella forsetii), this protein is Ribosome-binding factor A.